The primary structure comprises 1256 residues: GPI inositol-deacylase (1256 aa).

Residues 37-48 (DVYANSTTNATA) are compositionally biased toward polar residues. The interval 37 to 203 (DVYANSTTNA…MEKEEEQKFV (167 aa)) is disordered. N-linked (GlcNAc...) asparagine glycosylation is found at Asn41 and Asn45. Positions 59 to 68 (PRPSRPSQSS) are enriched in low complexity. Residues 69–83 (AAERTSPESPSVRQS) show a composition bias toward polar residues. Residues 107-135 (QSPSQQSQNQQQQQQQQQQQQQQQQQQQS) show a composition bias toward low complexity. Residues 143 to 156 (SGNFNWKLSHSRNG) are compositionally biased toward polar residues. Asn155 is a glycosylation site (N-linked (GlcNAc...) asparagine). Residues 165-180 (FFSSSFSHSPSTPPLS) are compositionally biased toward low complexity. Over residues 190 to 202 (HSKEMEKEEEQKF) the composition is skewed to basic and acidic residues. A helical membrane pass occupies residues 214 to 234 (AITFVTLLISILGIGFLALVL). N-linked (GlcNAc...) asparagine glycosylation is present at Asn235. Ser397 is a catalytic residue. Residue Asn582 is glycosylated (N-linked (GlcNAc...) asparagine). Transmembrane regions (helical) follow at residues 882-902 (LYMR…TLVL) and 929-949 (SIPL…NSSS). A glycan (N-linked (GlcNAc...) asparagine) is linked at Asn960. A run of 6 helical transmembrane segments spans residues 980–1000 (PFFW…CTVF), 1005–1025 (LTLV…PGWI), 1053–1073 (ILLV…VCCL), 1103–1123 (SILL…VVWI), 1130–1150 (WLTP…IILV), and 1172–1192 (VLLF…AYML). 3 N-linked (GlcNAc...) asparagine glycosylation sites follow: Asn1212, Asn1239, and Asn1242.

The protein belongs to the GPI inositol-deacylase family.

It is found in the endoplasmic reticulum membrane. Its function is as follows. Involved in inositol deacylation of GPI-anchored proteins which plays important roles in the quality control and ER-associated degradation of GPI-anchored proteins. In Neurospora crassa (strain ATCC 24698 / 74-OR23-1A / CBS 708.71 / DSM 1257 / FGSC 987), this protein is GPI inositol-deacylase (bst-1).